Here is a 141-residue protein sequence, read N- to C-terminus: Alpha-lactalbumin (141 aa).

Residues 1-19 (MMPLVPLLLVSIVFPGIQA) form the signal peptide. The 122-residue stretch at 20–141 (TQLTRCELTE…ENLEQWVCKK (122 aa)) folds into the C-type lysozyme domain. 4 disulfide bridges follow: Cys-25–Cys-139, Cys-47–Cys-130, Cys-80–Cys-96, and Cys-92–Cys-110. Residue Asn-64 is glycosylated (N-linked (GlcNAc...) asparagine). 3 residues coordinate Ca(2+): Asp-101, Asp-106, and Asp-107.

It belongs to the glycosyl hydrolase 22 family. In terms of assembly, lactose synthase (LS) is a heterodimer of a catalytic component, beta1,4-galactosyltransferase (beta4Gal-T1) and a regulatory component, alpha-lactalbumin (LA). In terms of tissue distribution, mammary gland specific. Secreted in milk.

The protein resides in the secreted. In terms of biological role, regulatory subunit of lactose synthase, changes the substrate specificity of galactosyltransferase in the mammary gland making glucose a good acceptor substrate for this enzyme. This enables LS to synthesize lactose, the major carbohydrate component of milk. In other tissues, galactosyltransferase transfers galactose onto the N-acetylglucosamine of the oligosaccharide chains in glycoproteins. The chain is Alpha-lactalbumin (LALBA) from Oryctolagus cuniculus (Rabbit).